A 184-amino-acid polypeptide reads, in one-letter code: Photosystem I assembly protein Ycf4 (184 aa).

The next 2 helical transmembrane spans lie at 21 to 43 (NFCWAFILLFGALGFFFVGFSSY) and 58 to 80 (LFIPQGIVMCFYGIAGLFISFYL).

Belongs to the Ycf4 family.

Its subcellular location is the plastid. It is found in the chloroplast thylakoid membrane. Seems to be required for the assembly of the photosystem I complex. This Marchantia polymorpha (Common liverwort) protein is Photosystem I assembly protein Ycf4.